The chain runs to 211 residues: Prolactin-1 (211 aa).

Positions 1–23 (MARRSQGTKLHLAVLCLVVSCHA) are cleaved as a signal peptide. 2 disulfides stabilise this stretch: cysteine 69-cysteine 184 and cysteine 201-cysteine 211.

This sequence belongs to the somatotropin/prolactin family.

Its subcellular location is the secreted. This Oncorhynchus keta (Chum salmon) protein is Prolactin-1 (prl1).